A 1370-amino-acid polypeptide reads, in one-letter code: Reverse gyrase 1 (1370 aa).

The RG N-terminal-type zinc finger occupies 6–47; it reads AASRGVYRYLCPNCGGPNSEERLSRGLPCPRCLPRLPRKGVS. The Zn(2+) site is built by Cys-16, Cys-19, Cys-34, and Cys-37. ATP-binding positions include Gln-95 and 112-119; that span reads APTGVGKT. The 189-residue stretch at 99–287 folds into the Helicase ATP-binding domain; it reads AKRLARGDSF…RKKLLEVKRR (189 aa). Positions 220–223 match the DEAD box motif; the sequence is DDVD. Residues 643–1370 are topoisomerase I; the sequence is ELVRTALLVV…VSRVWGAGVG (728 aa). Positions 647–825 constitute a Toprim domain; that stretch reads TALLVVESPN…DIKRLEFHEV (179 aa). Glu-653 provides a ligand contact to Mg(2+). Residues 744-772 form an RG C-terminal-type zinc finger; it reads IKRCLDCGYQFVDEASRCPRCGSELIRNS. The Zn(2+) site is built by Cys-747, Cys-750, Cys-761, and Cys-764. Residue Asp-794 participates in Mg(2+) binding. The region spanning 841–1323 is the Topo IA-type catalytic domain; the sequence is DDNLVDAQVV…SVFNEISDLA (483 aa). The active-site O-(5'-phospho-DNA)-tyrosine intermediate is the Tyr-1028.

It in the N-terminal section; belongs to the DEAD box helicase family. DDVD subfamily. The protein in the C-terminal section; belongs to the type IA topoisomerase family. Monomer. The cofactor is Zn(2+). Mg(2+) serves as cofactor.

Its subcellular location is the cytoplasm. The enzyme catalyses ATP + H2O = ADP + phosphate + H(+). Its function is as follows. Modifies the topological state of DNA by introducing positive supercoils in an ATP-dependent process, increasing the linking number in steps of +1. Binds to single-stranded DNA, transiently cleaves and then rejoins the ends, introducing a positive supercoil in the process. The scissile phosphodiester is attacked by the catalytic tyrosine of the enzyme, resulting in the formation of a DNA-(5'-phosphotyrosyl)-enzyme intermediate. Probably involved in rewinding DNA strands in regions of the chromosome that have opened up to allow replication, transcription, DNA repair and/or for DNA protection. The chain is Reverse gyrase 1 from Aeropyrum pernix (strain ATCC 700893 / DSM 11879 / JCM 9820 / NBRC 100138 / K1).